The chain runs to 53 residues: Light-harvesting protein B-800/820 alpha chain (53 aa).

Over 1 to 14 the chain is Cytoplasmic; sequence MNQGKIWTVVNPAV. The chain crosses the membrane as a helical span at residues 15-35; sequence GLPLLLGSVAITALLVHLAVL. His-31 contributes to the a bacteriochlorophyll binding site. The Periplasmic portion of the chain corresponds to 36 to 53; the sequence is THTTWFPAFTQGGLKKAA.

This sequence belongs to the antenna complex alpha subunit family. As to quaternary structure, the core complex is formed by different alpha and beta chains, binding bacteriochlorophyll molecules, and arranged most probably in tetrameric structures disposed around the reaction center. The non-pigmented gamma chains may constitute additional components.

It is found in the cell inner membrane. Antenna complexes are light-harvesting systems, which transfer the excitation energy to the reaction centers. The protein is Light-harvesting protein B-800/820 alpha chain of Rhodoblastus acidophilus (Rhodopseudomonas acidophila).